The chain runs to 447 residues: MSQNHTILQSLPVGQKVGIAFSGGLDTSAALLWMKLKGALPYAYTANLGQPDEDDYNAIPKKAMEYGAENARLIDCRAQLAHEGIAAIQCGAFHVSTGGIAYFNTTPLGRAVTGTMLVSAMKEDDVNIWGDGSTYKGNDIERFYRYGLLTNPALKIYKPWLDQQFIDELGGRHEMSEFLIANGFNYKMSVEKAYSTDSNMLGATHEAKDLEFLNSGIKIVKPIMGVAFWDENVEVSPEEVSVRFEEGVPVALNGKEYADPVELFLEANRIGGRHGLGMSDQIENRIIEAKSRGIYEAPGMALFHIAYERLVTGIHNEDTIEQYRINGLRLGRLLYQGRWFDSQALMLRETAQRWVAKAITGEVTLELRRGNDYSILNTESPNLTYQPERLSMEKVEDAAFTPLDRIGQLTMRNLDITDTRAKLGIYSQSGLLSLGEGSVLPQLGNKQ.

Residues 20 to 28 and Ala-46 contribute to the ATP site; that span reads AFSGGLDTS. Tyr-102 serves as a coordination point for L-citrulline. ATP is bound by residues Gly-132 and Thr-134. L-aspartate is bound by residues Thr-134, Asn-138, and Asp-139. Asn-138 is a binding site for L-citrulline. Asp-139 serves as a coordination point for ATP. Residues Arg-142 and Ser-195 each coordinate L-citrulline. Residue Asp-197 coordinates ATP. Residues Thr-204, Glu-206, and Glu-283 each contribute to the L-citrulline site.

This sequence belongs to the argininosuccinate synthase family. Type 2 subfamily. As to quaternary structure, homotetramer.

Its subcellular location is the cytoplasm. It catalyses the reaction L-citrulline + L-aspartate + ATP = 2-(N(omega)-L-arginino)succinate + AMP + diphosphate + H(+). Its pathway is amino-acid biosynthesis; L-arginine biosynthesis; L-arginine from L-ornithine and carbamoyl phosphate: step 2/3. This Neisseria meningitidis serogroup C (strain 053442) protein is Argininosuccinate synthase.